Consider the following 190-residue polypeptide: dTTP/UTP pyrophosphatase (190 aa).

Residue aspartate 71 is the Proton acceptor of the active site.

It belongs to the Maf family. YhdE subfamily. Requires a divalent metal cation as cofactor.

The protein localises to the cytoplasm. It catalyses the reaction dTTP + H2O = dTMP + diphosphate + H(+). The enzyme catalyses UTP + H2O = UMP + diphosphate + H(+). Nucleoside triphosphate pyrophosphatase that hydrolyzes dTTP and UTP. May have a dual role in cell division arrest and in preventing the incorporation of modified nucleotides into cellular nucleic acids. The protein is dTTP/UTP pyrophosphatase of Xanthomonas campestris pv. campestris (strain ATCC 33913 / DSM 3586 / NCPPB 528 / LMG 568 / P 25).